The following is a 600-amino-acid chain: Methylenetetrahydrofolate reductase 2 (600 aa).

Residue glutamate 22 is the Proton donor/acceptor of the active site. Residues 22–27 and 54–55 each bind NAD(+); these read EYFVPK and TW. FAD contacts are provided by residues 54-55, histidine 84, 114-116, 133-134, tyrosine 156, aspartate 171, and lysine 178; these read TW, RGD, and YA. Aspartate 116 is a binding site for substrate. Substrate is bound by residues glutamine 189 and tyrosine 282.

This sequence belongs to the methylenetetrahydrofolate reductase family. Requires FAD as cofactor.

It carries out the reaction (6S)-5-methyl-5,6,7,8-tetrahydrofolate + NADP(+) = (6R)-5,10-methylene-5,6,7,8-tetrahydrofolate + NADPH + H(+). It participates in one-carbon metabolism; tetrahydrofolate interconversion. This is Methylenetetrahydrofolate reductase 2 (MET13) from Saccharomyces cerevisiae (strain ATCC 204508 / S288c) (Baker's yeast).